The primary structure comprises 270 residues: UPF0246 protein PsycPRwf_0637 (270 aa).

Belongs to the UPF0246 family.

This Psychrobacter sp. (strain PRwf-1) protein is UPF0246 protein PsycPRwf_0637.